The primary structure comprises 145 residues: Large ribosomal subunit protein bL19 (145 aa).

This sequence belongs to the bacterial ribosomal protein bL19 family.

This protein is located at the 30S-50S ribosomal subunit interface and may play a role in the structure and function of the aminoacyl-tRNA binding site. The protein is Large ribosomal subunit protein bL19 of Brachyspira hyodysenteriae (strain ATCC 49526 / WA1).